The following is a 645-amino-acid chain: Threonine--tRNA ligase (645 aa).

A TGS domain is found at 3-64 (DMINITFPDG…EQDGTITIVT (62 aa)). The interval 247–544 (DHRKLGKELG…LLEEYKGAFP (298 aa)) is catalytic. Zn(2+) is bound by residues cysteine 340, histidine 391, and histidine 521.

This sequence belongs to the class-II aminoacyl-tRNA synthetase family. In terms of assembly, homodimer. It depends on Zn(2+) as a cofactor.

The protein resides in the cytoplasm. It carries out the reaction tRNA(Thr) + L-threonine + ATP = L-threonyl-tRNA(Thr) + AMP + diphosphate + H(+). Its function is as follows. Catalyzes the attachment of threonine to tRNA(Thr) in a two-step reaction: L-threonine is first activated by ATP to form Thr-AMP and then transferred to the acceptor end of tRNA(Thr). Also edits incorrectly charged L-seryl-tRNA(Thr). The sequence is that of Threonine--tRNA ligase from Halalkalibacterium halodurans (strain ATCC BAA-125 / DSM 18197 / FERM 7344 / JCM 9153 / C-125) (Bacillus halodurans).